The chain runs to 301 residues: Probable alpha-L-glutamate ligase (301 aa).

The region spanning 104–287 is the ATP-grasp domain; the sequence is LQLLSRKGIG…VAGIIIEYLE (184 aa). ATP-binding positions include K141, 178 to 179, D187, and 211 to 213; these read EY and RSN. Mg(2+) is bound by residues D248, E260, and N262. Positions 248, 260, and 262 each coordinate Mn(2+).

It belongs to the RimK family. Mg(2+) is required as a cofactor. The cofactor is Mn(2+).

The polypeptide is Probable alpha-L-glutamate ligase (Azotobacter vinelandii (strain DJ / ATCC BAA-1303)).